The chain runs to 376 residues: Ribosomal RNA large subunit methyltransferase G (376 aa).

It belongs to the methyltransferase superfamily. RlmG family.

The protein localises to the cytoplasm. It carries out the reaction guanosine(1835) in 23S rRNA + S-adenosyl-L-methionine = N(2)-methylguanosine(1835) in 23S rRNA + S-adenosyl-L-homocysteine + H(+). In terms of biological role, specifically methylates the guanine in position 1835 (m2G1835) of 23S rRNA. The protein is Ribosomal RNA large subunit methyltransferase G of Klebsiella pneumoniae subsp. pneumoniae (strain ATCC 700721 / MGH 78578).